The sequence spans 199 residues: Outer-membrane lipoprotein LolB (199 aa).

Positions 1-28 are cleaved as a signal peptide; sequence MSVCPAPRSPVRWLHAFTLCLLLAVLAG. Cys-29 carries the N-palmitoyl cysteine lipid modification. The S-diacylglycerol cysteine moiety is linked to residue Cys-29.

It belongs to the LolB family. In terms of assembly, monomer.

The protein resides in the cell outer membrane. Its function is as follows. Plays a critical role in the incorporation of lipoproteins in the outer membrane after they are released by the LolA protein. In Bordetella parapertussis (strain 12822 / ATCC BAA-587 / NCTC 13253), this protein is Outer-membrane lipoprotein LolB.